The following is a 311-amino-acid chain: MNKNKPFIVVIVGPTASGKTELSIELAKRINGEIISGDSMQVYKHMNIGTAKVTPEEMDGIPHHLIDILNPDDTFSAYEFKRLAEDLITDITNRGKVPIIAGGTGLYIQSLIYNYELEDETVTPAQLSIVKQKLSALEHLDNQQLHDYLAQFDAVSAENIHPNNRQRGLRAIEYYLKTKKLLSNRKKVQQFTENYDTLLLGIEMSRKTLYSRINKRVDIMLDHGLFREVQQLVEQGYESCQSMQAIGYKELIPVINGQMIYEDAVNDLKQHSRQYAKRQMTWFKNKMSVHWLDKENMSLQMMLDEITTQIK.

ATP is bound at residue 13–20 (GPTASGKT). 15–20 (TASGKT) contacts substrate. Interaction with substrate tRNA regions lie at residues 38-41 (DSMQ) and 166-170 (QRGLR).

It belongs to the IPP transferase family. In terms of assembly, monomer. Mg(2+) serves as cofactor.

It catalyses the reaction adenosine(37) in tRNA + dimethylallyl diphosphate = N(6)-dimethylallyladenosine(37) in tRNA + diphosphate. Catalyzes the transfer of a dimethylallyl group onto the adenine at position 37 in tRNAs that read codons beginning with uridine, leading to the formation of N6-(dimethylallyl)adenosine (i(6)A). In Staphylococcus aureus (strain MSSA476), this protein is tRNA dimethylallyltransferase.